A 191-amino-acid chain; its full sequence is dCTP deaminase (191 aa).

DCTP contacts are provided by residues 112–117, 136–138, Q157, Y173, and Q183; these read KSTYAR and TLE. E138 functions as the Proton donor/acceptor in the catalytic mechanism.

The protein belongs to the dCTP deaminase family. Homotrimer.

The catalysed reaction is dCTP + H2O + H(+) = dUTP + NH4(+). It functions in the pathway pyrimidine metabolism; dUMP biosynthesis; dUMP from dCTP (dUTP route): step 1/2. In terms of biological role, catalyzes the deamination of dCTP to dUTP. This Psychrobacter sp. (strain PRwf-1) protein is dCTP deaminase.